The sequence spans 914 residues: Thyroid peroxidase (914 aa).

Positions 1–31 (MRTLGAMAVMLVVMGTAIFLPFLLRSRDILG) are cleaved as a signal peptide. At 32–834 (GKTMTSHVIS…TCIDSGRLPR (803 aa)) the chain is on the extracellular side. Residue N123 is glycosylated (N-linked (GlcNAc...) asparagine). A disulfide bridge links C136 with C152. D232 is a heme b binding site. Catalysis depends on H233, which acts as the Proton acceptor. D234 lines the Ca(2+) pocket. Intrachain disulfides connect C253/C263 and C257/C278. N271 and N299 each carry an N-linked (GlcNAc...) asparagine glycan. Ca(2+)-binding residues include T313, F315, D317, and S319. N-linked (GlcNAc...) asparagine glycosylation occurs at N334. Heme b is bound by residues E387 and H482. Disulfide bonds link C586/C643, C684/C709, C730/C770, C756/C782, C788/C802, C796/C811, and C813/C826. An N-linked (GlcNAc...) asparagine glycan is attached at N603. The Sushi domain maps to 728–783 (DKCVFPEKVDNGNFVHCEESGKLVLVYSCFHGYKLQGQEQVTCTQNGWDSEPPVCK). The EGF-like; calcium-binding domain occupies 784 to 827 (DVNECADLTHPPCHSSAKCKNTKGSFQCVCTDPYMLGEDEKTCI). Residues 835–859 (ASWVSIALGALLIGGLASLSWTVIC) form a helical membrane-spanning segment. Topologically, residues 860 to 914 (RWTHADKKSTLLITERVTMESGFRKSQESGISPQKAEVQDAEQEPAYGSRVLLCE) are cytoplasmic. Residues 882-907 (FRKSQESGISPQKAEVQDAEQEPAYG) form a disordered region.

Belongs to the peroxidase family. XPO subfamily. In terms of assembly, interacts with DUOX1, DUOX2 and CYBA. Ca(2+) is required as a cofactor. It depends on heme b as a cofactor. Post-translationally, heme is covalently bound through a H(2)O(2)-dependent autocatalytic process. Heme insertion is important for the delivery of protein at the cell surface. In terms of processing, cleaved in its N-terminal part.

It is found in the membrane. It catalyses the reaction 2 iodide + H2O2 + 2 H(+) = diiodine + 2 H2O. The catalysed reaction is [thyroglobulin]-L-tyrosine + iodide + H2O2 + H(+) = [thyroglobulin]-3-iodo-L-tyrosine + 2 H2O. The enzyme catalyses [thyroglobulin]-3-iodo-L-tyrosine + iodide + H2O2 + H(+) = [thyroglobulin]-3,5-diiodo-L-tyrosine + 2 H2O. It carries out the reaction 2 [thyroglobulin]-3,5-diiodo-L-tyrosine + H2O2 = [thyroglobulin]-L-thyroxine + [thyroglobulin]-dehydroalanine + 2 H2O. It catalyses the reaction [thyroglobulin]-3-iodo-L-tyrosine + [thyroglobulin]-3,5-diiodo-L-tyrosine + H2O2 = [thyroglobulin]-3,3',5-triiodo-L-thyronine + [thyroglobulin]-dehydroalanine + 2 H2O. It functions in the pathway hormone biosynthesis; thyroid hormone biosynthesis. Its function is as follows. Iodination and coupling of the hormonogenic tyrosines in thyroglobulin to yield the thyroid hormones T(3) and T(4). This chain is Thyroid peroxidase (Tpo), found in Rattus norvegicus (Rat).